A 343-amino-acid polypeptide reads, in one-letter code: MEKFVDRVKIFVKGGKGGDGAVAFLREKYRPKGGPAGGDGGKGGDVILVATSSKHTLLDFKYKKHYIAQNGEPGKGKKMHGKDGEDLIIYVPVGTVVKDAQTGEVICDLVKEGQKCIVAKGGKGGRGNARFATPTNQAPTYAEKGQKGEERWIILELKLIADVGLVGFPNAGKSTLLSRLTRAKPKIADYPFTTLSPNLGVMELDWERRLVIADIPGLIEDAHKGAGLGHEFLRHIERTKFLAHVIDVSDFREREPVQAFEAINRELELYSPKLAQKPQIVVANKIDALSDRSLLSELEKYFKEKGYEFYAVSALTGEGIEELKEGLWKKYEEIRDKESAQVT.

The 159-residue stretch at 2-160 folds into the Obg domain; sequence EKFVDRVKIF…RWIILELKLI (159 aa). An OBG-type G domain is found at 161–332; that stretch reads ADVGLVGFPN…LKEGLWKKYE (172 aa). GTP-binding positions include 167-174, 192-196, 214-217, 284-287, and 313-315; these read GFPNAGKS, FTTLS, DIPG, NKID, and SAL. Mg(2+) is bound by residues S174 and T194.

The protein belongs to the TRAFAC class OBG-HflX-like GTPase superfamily. OBG GTPase family. Monomer. The cofactor is Mg(2+).

Its subcellular location is the cytoplasm. In terms of biological role, an essential GTPase which binds GTP, GDP and possibly (p)ppGpp with moderate affinity, with high nucleotide exchange rates and a fairly low GTP hydrolysis rate. Plays a role in control of the cell cycle, stress response, ribosome biogenesis and in those bacteria that undergo differentiation, in morphogenesis control. This is GTPase Obg from Aquifex aeolicus (strain VF5).